A 227-amino-acid polypeptide reads, in one-letter code: Tegument protein ORF55 (227 aa).

The S-palmitoyl cysteine; by host moiety is linked to residue C11. The segment at 183–227 (VTRQPEATLPKPPTEDPSVSAMHSSIPPRPSSTLEETTESAIGST) is disordered. Residues 213–227 (SSTLEETTESAIGST) show a composition bias toward polar residues.

It belongs to the herpesviridae UL51 family. In terms of assembly, oligomerizes. Interacts with ORF42; this interaction mediates ORF42 incorporation to virions. Interacts with vBCL2. In terms of processing, phosphorylated. Palmitoylation is necessary for Golgi localization.

It localises to the virion tegument. The protein resides in the host cytoplasm. The protein localises to the host Golgi apparatus. In terms of biological role, plays several roles during the time course of infection, including egress of virus particles from the perinuclear space and secondary envelopment of cytoplasmic capsids that bud into specific trans-Golgi network (TGN)-derived membranes. The polypeptide is Tegument protein ORF55 (ORF55) (Homo sapiens (Human)).